We begin with the raw amino-acid sequence, 289 residues long: 4-diphosphocytidyl-2-C-methyl-D-erythritol kinase (289 aa).

Lys-11 is a catalytic residue. An ATP-binding site is contributed by Pro-96–Ser-106. Asp-138 is an active-site residue.

It belongs to the GHMP kinase family. IspE subfamily.

It catalyses the reaction 4-CDP-2-C-methyl-D-erythritol + ATP = 4-CDP-2-C-methyl-D-erythritol 2-phosphate + ADP + H(+). Its pathway is isoprenoid biosynthesis; isopentenyl diphosphate biosynthesis via DXP pathway; isopentenyl diphosphate from 1-deoxy-D-xylulose 5-phosphate: step 3/6. Its function is as follows. Catalyzes the phosphorylation of the position 2 hydroxy group of 4-diphosphocytidyl-2C-methyl-D-erythritol. In Azorhizobium caulinodans (strain ATCC 43989 / DSM 5975 / JCM 20966 / LMG 6465 / NBRC 14845 / NCIMB 13405 / ORS 571), this protein is 4-diphosphocytidyl-2-C-methyl-D-erythritol kinase.